The sequence spans 157 residues: MKKYIFFFLFSFINFFFVYDVTCTKEVTSTNDDPLTPLNRFDKYYLRMFKKVPRLQQNGSNIINGVNMKNTVIVLYFFAKWCQACTMQSTEMDKLQKYYGKRIYLLKVDLDKNESLARKFSVKSLPTIILLKNKTMLARKDHFVSSNDLIALIKKHL.

Positions 1–23 (MKKYIFFFLFSFINFFFVYDVTC) are cleaved as a signal peptide. The 112-residue stretch at 46–157 (LRMFKKVPRL…DLIALIKKHL (112 aa)) folds into the Thioredoxin domain. Catalysis depends on nucleophile residues cysteine 82 and cysteine 85. A disulfide bridge links cysteine 82 with cysteine 85.

This sequence belongs to the thioredoxin family. As to quaternary structure, monomer. Component of the Plasmodium translocon of exported proteins (PTEX) complex composed of HSP101, EXP2, PTEX150, PTEX88 and TRX2. In terms of processing, the disulfide bond between Cys-82 and Cys-85 acts as a redox-active center and is reduced by thioredoxin reductase TRXR.

The protein resides in the parasitophorous vacuole membrane. Participates in various redox reactions through the reversible oxidation of its active center dithiol to a disulfide and catalyzes dithiol-disulfide exchange reactions. As part of the translocon PTEX complex, plays a role in the export of parasite proteins into the host erythrocyte. The translocon PTEX complex is a multi-protein machinery resident in the parasite parasitophorous vacuolar membrane, responsible for protein secretion into host cells. May contribute to the unfolding of proteins containing the PEXEL localization motif before their passage through the translocon or regulate the PTEX complex function. The protein is Thioredoxin 2 of Plasmodium falciparum (isolate 3D7).